The primary structure comprises 181 residues: MIQDSEFFRMEGVPITKEEIRAVSIGKLNLNPEDIVLDIGCGSGGMSVEISKRSKFVYAIDNSEDAKNTTVTNLKKFKIENCEVFLGDAKDLISEFDFNKVFIGGTQNIEQILEILKEKKIEKVVANTIVLENSVKIISKFEELRYNVDFVNVSVSYGKKINSGHIMLSKNPITIITATLK.

Residues Thr-16, 40–44, Asp-61, and Ala-89 each bind S-adenosyl-L-methionine; that span reads GCGSG.

Belongs to the methyltransferase superfamily. Archaeal-type CbiT family.

It catalyses the reaction Co-precorrin-6B + S-adenosyl-L-methionine = Co-precorrin-7 + S-adenosyl-L-homocysteine + CO2. Its pathway is cofactor biosynthesis; adenosylcobalamin biosynthesis; cob(II)yrinate a,c-diamide from sirohydrochlorin (anaerobic route): step 8/10. Functionally, catalyzes the methylation of C-15 in cobalt-precorrin-6B followed by the decarboxylation of C-12 to form cobalt-precorrin-7. This Methanococcus maripaludis (strain C7 / ATCC BAA-1331) protein is Probable cobalt-precorrin-6B C(15)-methyltransferase (decarboxylating).